The sequence spans 493 residues: MQASQLINSLKFKQVQPALTTDFDVTMLTQDTREVQPGAMFIAVVGYHVDGHDLVDQAIEKGAKIIVASKPLDVNVPVIYVENTERAMAILADVFYGAPSQKMRMIGVTGTNGKTTVTHLIEQIYRDQQQATGLIGTMYRKIKDEKLPTANTTPDAITTQRTLAAMRDAGVETVAMEVSSIALVLGRVWGIDYDIAVFTNLTQDHLDFHKTMAKYTEAKAMLFAQLGNKYSADGTNKVAVLNTDDPVGREFEQYTAAHVLTFGLKPDAMINAQNVEIKSHGTEFDLSVFGHVTHVTMQLIGQFNVYNMLAAFAAAYASGIPEDQIIKSLEKVTGVKGRFQSVPSHTGVSVIVDYSHTPDGLLNALETIQDFATKDIYCVVGCGGDRDKTKRPKMAKIAVEHSTKPIFTSDNPRTEDPTMILNDMVAGVPNADVPVYEDRHVAIAKAIEAAQPGDVVLIAGKGHEDYQIIGRTKHHFDDSEEAAKALALKPTID.

T32 contacts UDP-N-acetyl-alpha-D-muramoyl-L-alanyl-D-glutamate. Position 110–116 (110–116 (GTNGKTT)) interacts with ATP. UDP-N-acetyl-alpha-D-muramoyl-L-alanyl-D-glutamate contacts are provided by residues N151, 152–153 (TT), S179, and R187. K219 bears the N6-carboxylysine mark. Meso-2,6-diaminopimelate is bound by residues R386, 410–413 (DNPR), G460, and E464. The Meso-diaminopimelate recognition motif motif lies at 410-413 (DNPR).

It belongs to the MurCDEF family. MurE subfamily. Requires Mg(2+) as cofactor. Post-translationally, carboxylation is probably crucial for Mg(2+) binding and, consequently, for the gamma-phosphate positioning of ATP.

It is found in the cytoplasm. It catalyses the reaction UDP-N-acetyl-alpha-D-muramoyl-L-alanyl-D-glutamate + meso-2,6-diaminopimelate + ATP = UDP-N-acetyl-alpha-D-muramoyl-L-alanyl-gamma-D-glutamyl-meso-2,6-diaminopimelate + ADP + phosphate + H(+). Its pathway is cell wall biogenesis; peptidoglycan biosynthesis. Its function is as follows. Catalyzes the addition of meso-diaminopimelic acid to the nucleotide precursor UDP-N-acetylmuramoyl-L-alanyl-D-glutamate (UMAG) in the biosynthesis of bacterial cell-wall peptidoglycan. This Lactiplantibacillus plantarum (strain ATCC BAA-793 / NCIMB 8826 / WCFS1) (Lactobacillus plantarum) protein is UDP-N-acetylmuramoyl-L-alanyl-D-glutamate--2,6-diaminopimelate ligase.